The following is a 742-amino-acid chain: 5-methyltetrahydropteroyltriglutamate--homocysteine methyltransferase (742 aa).

5-methyltetrahydropteroyltri-L-glutamate-binding positions include 18 to 21 (REWK) and K112. L-homocysteine contacts are provided by residues 420-422 (IGS) and E473. L-methionine is bound by residues 420 to 422 (IGS) and E473. W550 is a 5-methyltetrahydropteroyltri-L-glutamate binding site. D588 contributes to the L-homocysteine binding site. D588 is an L-methionine binding site. E594 is a binding site for 5-methyltetrahydropteroyltri-L-glutamate. Residues H630, C632, and E654 each contribute to the Zn(2+) site. H683 (proton donor) is an active-site residue. A Zn(2+)-binding site is contributed by C715.

The protein belongs to the vitamin-B12 independent methionine synthase family. Zn(2+) serves as cofactor.

The enzyme catalyses 5-methyltetrahydropteroyltri-L-glutamate + L-homocysteine = tetrahydropteroyltri-L-glutamate + L-methionine. Its pathway is amino-acid biosynthesis; L-methionine biosynthesis via de novo pathway; L-methionine from L-homocysteine (MetE route): step 1/1. Catalyzes the transfer of a methyl group from 5-methyltetrahydrofolate to homocysteine resulting in methionine formation. In Staphylococcus aureus (strain JH9), this protein is 5-methyltetrahydropteroyltriglutamate--homocysteine methyltransferase.